A 134-amino-acid chain; its full sequence is Complexin-1 (134 aa).

Disordered regions lie at residues 1-60 and 74-113; these read MEFV…AERE and KKEE…EEED. The span at 15–60 shows a compositional bias: basic and acidic residues; that stretch reads DMGKMLGGDEEKDPDAAKKEEERQEALRQAEEERKAKYAKMEAERE. A coiled-coil region spans residues 29-69; it reads DAAKKEEERQEALRQAEEERKAKYAKMEAEREAVRQGIRDK. The interval 48 to 70 is interaction with the SNARE complex; sequence RKAKYAKMEAEREAVRQGIRDKY.

Belongs to the complexin/synaphin family. Binds to the SNARE core complex containing SNAP25, VAMP2 and STX1A. Nervous system. In hippocampus and cerebellum, expressed mainly by inhibitory neurons. Overexpressed in substantia nigra from patients with Parkinson disease.

It localises to the cytoplasm. The protein resides in the cytosol. It is found in the perikaryon. The protein localises to the presynapse. In terms of biological role, positively regulates a late step in exocytosis of various cytoplasmic vesicles, such as synaptic vesicles and other secretory vesicles. Organizes the SNAREs into a cross-linked zigzag topology that, when interposed between the vesicle and plasma membranes, is incompatible with fusion, thereby preventing SNAREs from releasing neurotransmitters until an action potential arrives at the synapse. Also involved in glucose-induced secretion of insulin by pancreatic beta-cells. Essential for motor behavior. The polypeptide is Complexin-1 (CPLX1) (Homo sapiens (Human)).